The following is a 977-amino-acid chain: Glycine dehydrogenase (decarboxylating) (977 aa).

Lys702 is modified (N6-(pyridoxal phosphate)lysine).

The protein belongs to the GcvP family. As to quaternary structure, the glycine cleavage system is composed of four proteins: P, T, L and H. The cofactor is pyridoxal 5'-phosphate.

It catalyses the reaction N(6)-[(R)-lipoyl]-L-lysyl-[glycine-cleavage complex H protein] + glycine + H(+) = N(6)-[(R)-S(8)-aminomethyldihydrolipoyl]-L-lysyl-[glycine-cleavage complex H protein] + CO2. Its function is as follows. The glycine cleavage system catalyzes the degradation of glycine. The P protein binds the alpha-amino group of glycine through its pyridoxal phosphate cofactor; CO(2) is released and the remaining methylamine moiety is then transferred to the lipoamide cofactor of the H protein. The chain is Glycine dehydrogenase (decarboxylating) from Xanthomonas axonopodis pv. citri (strain 306).